A 154-amino-acid polypeptide reads, in one-letter code: uncharacterized protein (154 aa).

A disordered region spans residues 104 to 124 (NNNNNDNDNNNKEKEDNDEKE). The span at 112 to 124 (NNNKEKEDNDEKE) shows a compositional bias: basic and acidic residues.

This is an uncharacterized protein from Dictyostelium discoideum (Social amoeba).